Consider the following 839-residue polypeptide: Small conductance calcium-activated potassium channel protein 2 (839 aa).

Disordered stretches follow at residues 1 to 33 (MPIV…QESP), 64 to 115 (QRGF…QQPG), 195 to 258 (ALRQ…RRES), and 280 to 375 (SNLS…KKNQ). 2 stretches are compositionally biased toward low complexity: residues 198–212 (QQYA…QYHQ) and 219–235 (ATSP…GPPL). The segment covering 236–253 (SHHHHHPHPAHHQHHQPQ) has biased composition (basic residues). Residues 313–326 (SSPSAAAAASSSAP) show a composition bias toward low complexity. Gly residues predominate over residues 345–363 (GTGGGGSTGGGGGGSGHGS). A helical transmembrane segment spans residues 398-418 (ALIFGMFGIVVMVIETELSWG). At Tyr420 the chain carries Phosphotyrosine. Residues 428-448 (LALKCLISLSTIILLGLIIVY) traverse the membrane as a helical segment. The chain crosses the membrane as a helical span at residues 474 to 494 (IFFICLEILVCAIHPIPGNYT). Residues 516–536 (IILSIPMFLRLYLIARVMLLH) form a helical membrane-spanning segment. A helical membrane pass occupies residues 565 to 585 (LMTICPGTVLLVFSISLWIIA). The segment at residues 605–625 (FLGAMWLISITFLSIGYGDMV) is an intramembrane region (pore-forming). A helical membrane pass occupies residues 634 to 654 (VCLLTGIMGAGCTALVVAVVA). The calmodulin-binding stretch occupies residues 672 to 748 (DTQLTKRVKN…LVDLAKTQNI (77 aa)). The span at 810-819 (HVSYNAERSR) shows a compositional bias: basic and acidic residues. The segment at 810–839 (HVSYNAERSRSSSRRRRSSSTAPPTSSESS) is disordered. The segment covering 828–839 (SSTAPPTSSESS) has biased composition (low complexity).

It belongs to the potassium channel KCNN family. KCa2.2/KCNN2 subfamily. In terms of assembly, homodimer. Heteromultimer with KCNN1 and KCNN3. The complex is composed of 4 channel subunits each of which binds to a calmodulin subunit which regulates the channel activity through calcium-binding. Interacts (via N-terminal domain) with MPP2. In terms of tissue distribution, expressed in atrial and ventricular myocytes with higher levels in atrial myocytes (at protein level). Highly expressed in brain, liver and colon with low levels in kidney and testis. In colon, detected in smooth muscle cells.

The protein resides in the membrane. It is found in the cytoplasm. Its subcellular location is the myofibril. It localises to the sarcomere. The protein localises to the z line. The enzyme catalyses K(+)(in) = K(+)(out). Inhibited by bee venom neurotoxin apamin. Inhibited by UCL 1684 and tetraethylammonium (TEA). Functionally, small conductance calcium-activated potassium channel that mediates the voltage-independent transmembrane transfer of potassium across the cell membrane through a constitutive interaction with calmodulin which binds the intracellular calcium allowing its opening. The current is characterized by a voltage-independent activation, an intracellular calcium concentration increase-dependent activation and a single-channel conductance of about 3 picosiemens. Also presents an inwardly rectifying current, thus reducing its already small outward conductance of potassium ions, which is particularly the case when the membrane potential displays positive values, above + 20 mV. The inward rectification could be due to a blockade of the outward current by intracellular divalent cations such as calcium and magnesium and could also be due to an intrinsic property of the channel pore, independent of intracellular divalent ions. There are three positively charged amino acids in the S6 transmembrane domain, close to the pore, that collectively control the conductance and rectification through an electrostatic mechanism. Additionally, electrostatic contributions from these residues also play an important role in determining the intrinsic open probability of the channel in the absence of calcium, affecting the apparent calcium affinity for activation. Forms an heteromeric complex with calmodulin, which is constitutively associated in a calcium-independent manner. Channel opening is triggered when calcium binds the calmodulin resulting in a rotary movement leading to the formation of the dimeric complex to open the gate. Plays a role in the repolarization phase of cardiac action potential. In Mus musculus (Mouse), this protein is Small conductance calcium-activated potassium channel protein 2.